The sequence spans 450 residues: Phosphoglucosamine mutase (450 aa).

Ser-100 acts as the Phosphoserine intermediate in catalysis. Mg(2+) is bound by residues Ser-100, Asp-240, Asp-242, and Asp-244. Position 100 is a phosphoserine (Ser-100).

The protein belongs to the phosphohexose mutase family. Requires Mg(2+) as cofactor. In terms of processing, activated by phosphorylation.

The catalysed reaction is alpha-D-glucosamine 1-phosphate = D-glucosamine 6-phosphate. Its function is as follows. Catalyzes the conversion of glucosamine-6-phosphate to glucosamine-1-phosphate. In Desulforudis audaxviator (strain MP104C), this protein is Phosphoglucosamine mutase.